The following is a 184-amino-acid chain: J-type co-chaperone JAC1, mitochondrial (184 aa).

Residues 1 to 10 constitute a mitochondrion transit peptide; sequence MLKYLVQRRF. The region spanning 13–82 is the J domain; it reads TFYELFPKTF…LRRSQYMLKL (70 aa). The HSP70 binding signature appears at 48–50; that stretch reads HPD. An interaction with ISU1 region spans residues 71-184; sequence DPLRRSQYML…APGKQLEMNH (114 aa).

It belongs to the HscB family. As to quaternary structure, interacts with ISU1 and SSQ1.

It localises to the mitochondrion matrix. In terms of biological role, co-chaperone required for the assembly of iron-sulfur (Fe/S) clusters in mitochondria. Stimulates the ATPase activity of its specialized Hsp70 chaperone partner SSQ1, to mediate the transfer of iron-sulfur clusters from ISU1 to GRX5. Binds to the substrate protein ISU1 and targets it to SSQ1. This Saccharomyces cerevisiae (strain ATCC 204508 / S288c) (Baker's yeast) protein is J-type co-chaperone JAC1, mitochondrial.